The sequence spans 370 residues: Histidinol-phosphate aminotransferase 1 (370 aa).

Position 222 is an N6-(pyridoxal phosphate)lysine (Lys222).

Belongs to the class-II pyridoxal-phosphate-dependent aminotransferase family. Histidinol-phosphate aminotransferase subfamily. As to quaternary structure, homodimer. The cofactor is pyridoxal 5'-phosphate.

The enzyme catalyses L-histidinol phosphate + 2-oxoglutarate = 3-(imidazol-4-yl)-2-oxopropyl phosphate + L-glutamate. The protein operates within amino-acid biosynthesis; L-histidine biosynthesis; L-histidine from 5-phospho-alpha-D-ribose 1-diphosphate: step 7/9. The polypeptide is Histidinol-phosphate aminotransferase 1 (hisC1) (Bacillus cereus (strain ATCC 14579 / DSM 31 / CCUG 7414 / JCM 2152 / NBRC 15305 / NCIMB 9373 / NCTC 2599 / NRRL B-3711)).